A 469-amino-acid polypeptide reads, in one-letter code: Ribosomal protein uS12 methylthiotransferase RimO (469 aa).

The 116-residue stretch at 17-132 folds into the MTTase N-terminal domain; that stretch reads PRVGFVSLGC…VMDAVHLNLP (116 aa). 6 residues coordinate [4Fe-4S] cluster: Cys26, Cys62, Cys91, Cys167, Cys171, and Cys174. The region spanning 153 to 395 is the Radical SAM core domain; that stretch reads LTPKHYAYLK…AVAEEVSSLK (243 aa). The TRAM domain occupies 397–469; the sequence is QQRVGATMQV…QGHDLVAIPV (73 aa).

Belongs to the methylthiotransferase family. RimO subfamily. [4Fe-4S] cluster is required as a cofactor.

The protein resides in the cytoplasm. It carries out the reaction L-aspartate(89)-[ribosomal protein uS12]-hydrogen + (sulfur carrier)-SH + AH2 + 2 S-adenosyl-L-methionine = 3-methylsulfanyl-L-aspartate(89)-[ribosomal protein uS12]-hydrogen + (sulfur carrier)-H + 5'-deoxyadenosine + L-methionine + A + S-adenosyl-L-homocysteine + 2 H(+). Functionally, catalyzes the methylthiolation of an aspartic acid residue of ribosomal protein uS12. The chain is Ribosomal protein uS12 methylthiotransferase RimO from Polaromonas sp. (strain JS666 / ATCC BAA-500).